A 558-amino-acid chain; its full sequence is 2-isopropylmalate synthase (558 aa).

Positions 30–303 (PIWCSVDLRD…DPKLDCSDIE (274 aa)) constitute a Pyruvate carboxyltransferase domain. Residues Asp39, His242, His244, and Asn278 each contribute to the Mg(2+) site. Positions 437–558 (QPGARIKFVD…ANRVLDVVGK (122 aa)) are regulatory domain.

Belongs to the alpha-IPM synthase/homocitrate synthase family. LeuA type 2 subfamily. In terms of assembly, homodimer. Mg(2+) serves as cofactor.

The protein localises to the cytoplasm. It carries out the reaction 3-methyl-2-oxobutanoate + acetyl-CoA + H2O = (2S)-2-isopropylmalate + CoA + H(+). The protein operates within amino-acid biosynthesis; L-leucine biosynthesis; L-leucine from 3-methyl-2-oxobutanoate: step 1/4. In terms of biological role, catalyzes the condensation of the acetyl group of acetyl-CoA with 3-methyl-2-oxobutanoate (2-ketoisovalerate) to form 3-carboxy-3-hydroxy-4-methylpentanoate (2-isopropylmalate). The chain is 2-isopropylmalate synthase from Rhizobium meliloti (strain 1021) (Ensifer meliloti).